The following is a 249-amino-acid chain: Imidazole glycerol phosphate synthase subunit HisF (249 aa).

Catalysis depends on residues Asp11 and Asp130.

Belongs to the HisA/HisF family. Heterodimer of HisH and HisF.

The protein localises to the cytoplasm. The catalysed reaction is 5-[(5-phospho-1-deoxy-D-ribulos-1-ylimino)methylamino]-1-(5-phospho-beta-D-ribosyl)imidazole-4-carboxamide + L-glutamine = D-erythro-1-(imidazol-4-yl)glycerol 3-phosphate + 5-amino-1-(5-phospho-beta-D-ribosyl)imidazole-4-carboxamide + L-glutamate + H(+). It participates in amino-acid biosynthesis; L-histidine biosynthesis; L-histidine from 5-phospho-alpha-D-ribose 1-diphosphate: step 5/9. IGPS catalyzes the conversion of PRFAR and glutamine to IGP, AICAR and glutamate. The HisF subunit catalyzes the cyclization activity that produces IGP and AICAR from PRFAR using the ammonia provided by the HisH subunit. The protein is Imidazole glycerol phosphate synthase subunit HisF of Sulfolobus acidocaldarius (strain ATCC 33909 / DSM 639 / JCM 8929 / NBRC 15157 / NCIMB 11770).